The primary structure comprises 148 residues: 3-dehydroquinate dehydratase (148 aa).

The Proton acceptor role is filled by Tyr23. Asn75, His81, and Asp88 together coordinate substrate. His101 serves as the catalytic Proton donor. Substrate is bound by residues 102-103 (LS) and Arg112.

It belongs to the type-II 3-dehydroquinase family. As to quaternary structure, homododecamer.

It catalyses the reaction 3-dehydroquinate = 3-dehydroshikimate + H2O. Its pathway is metabolic intermediate biosynthesis; chorismate biosynthesis; chorismate from D-erythrose 4-phosphate and phosphoenolpyruvate: step 3/7. Its function is as follows. Catalyzes a trans-dehydration via an enolate intermediate. The protein is 3-dehydroquinate dehydratase of Xylella fastidiosa (strain 9a5c).